The chain runs to 477 residues: Chaperonin GroEL 2 (477 aa).

ATP contacts are provided by residues Thr-29–Pro-32, Asp-86–Thr-90, and Gly-416.

Belongs to the chaperonin (HSP60) family. Forms a cylinder of 14 subunits composed of two heptameric rings stacked back-to-back. Interacts with the co-chaperonin GroES.

The protein localises to the cytoplasm. The enzyme catalyses ATP + H2O + a folded polypeptide = ADP + phosphate + an unfolded polypeptide.. Together with its co-chaperonin GroES, plays an essential role in assisting protein folding. The GroEL-GroES system forms a nano-cage that allows encapsulation of the non-native substrate proteins and provides a physical environment optimized to promote and accelerate protein folding. The polypeptide is Chaperonin GroEL 2 (Streptomyces lividans).